We begin with the raw amino-acid sequence, 395 residues long: Chaperone protein DnaJ (395 aa).

The region spanning 5–70 (DFYEVLGVDK…NKRAAYDRMG (66 aa)) is the J domain. The CR-type zinc finger occupies 145-223 (GKDETIKVPT…CDGVGRVRKT (79 aa)). Residues C158, C161, C175, C178, C197, C200, C211, and C214 each coordinate Zn(2+). CXXCXGXG motif repeat units lie at residues 158-165 (CERCDGQG), 175-182 (CGTCQGAG), 197-204 (CPQCGGRG), and 211-218 (CNDCDGVG).

It belongs to the DnaJ family. Homodimer. The cofactor is Zn(2+).

It is found in the cytoplasm. Its function is as follows. Participates actively in the response to hyperosmotic and heat shock by preventing the aggregation of stress-denatured proteins and by disaggregating proteins, also in an autonomous, DnaK-independent fashion. Unfolded proteins bind initially to DnaJ; upon interaction with the DnaJ-bound protein, DnaK hydrolyzes its bound ATP, resulting in the formation of a stable complex. GrpE releases ADP from DnaK; ATP binding to DnaK triggers the release of the substrate protein, thus completing the reaction cycle. Several rounds of ATP-dependent interactions between DnaJ, DnaK and GrpE are required for fully efficient folding. Also involved, together with DnaK and GrpE, in the DNA replication of plasmids through activation of initiation proteins. In Maricaulis maris (strain MCS10) (Caulobacter maris), this protein is Chaperone protein DnaJ.